Consider the following 209-residue polypeptide: Thymidine kinase (209 aa).

ATP is bound by residues 9-16 (AAMNAGKS) and 88-91 (DEAQ). Residue Glu-89 is the Proton acceptor of the active site. Positions 146, 148, 183, and 186 each coordinate Zn(2+).

Belongs to the thymidine kinase family. Homotetramer.

Its subcellular location is the cytoplasm. It catalyses the reaction thymidine + ATP = dTMP + ADP + H(+). The sequence is that of Thymidine kinase from Legionella pneumophila (strain Lens).